We begin with the raw amino-acid sequence, 104 residues long: uncharacterized protein (104 aa).

The protein belongs to the BolA/IbaG family.

This is an uncharacterized protein from Buchnera aphidicola subsp. Acyrthosiphon pisum (strain APS) (Acyrthosiphon pisum symbiotic bacterium).